The following is a 236-amino-acid chain: Aspartate/glutamate leucyltransferase (236 aa).

The protein belongs to the R-transferase family. Bpt subfamily.

It is found in the cytoplasm. The catalysed reaction is N-terminal L-glutamyl-[protein] + L-leucyl-tRNA(Leu) = N-terminal L-leucyl-L-glutamyl-[protein] + tRNA(Leu) + H(+). It catalyses the reaction N-terminal L-aspartyl-[protein] + L-leucyl-tRNA(Leu) = N-terminal L-leucyl-L-aspartyl-[protein] + tRNA(Leu) + H(+). Functionally, functions in the N-end rule pathway of protein degradation where it conjugates Leu from its aminoacyl-tRNA to the N-termini of proteins containing an N-terminal aspartate or glutamate. The chain is Aspartate/glutamate leucyltransferase from Halorhodospira halophila (strain DSM 244 / SL1) (Ectothiorhodospira halophila (strain DSM 244 / SL1)).